The sequence spans 413 residues: DNA polymerase IV 1 (413 aa).

Residues 7–188 (IFHVDMNSFY…LPIEEMYGIG (182 aa)) form the UmuC domain. Residues D11 and D107 each coordinate Mg(2+). E108 is an active-site residue.

The protein belongs to the DNA polymerase type-Y family. As to quaternary structure, monomer. It depends on Mg(2+) as a cofactor.

It localises to the cytoplasm. The catalysed reaction is DNA(n) + a 2'-deoxyribonucleoside 5'-triphosphate = DNA(n+1) + diphosphate. Functionally, poorly processive, error-prone DNA polymerase involved in untargeted mutagenesis. Copies undamaged DNA at stalled replication forks, which arise in vivo from mismatched or misaligned primer ends. These misaligned primers can be extended by PolIV. Exhibits no 3'-5' exonuclease (proofreading) activity. May be involved in translesional synthesis, in conjunction with the beta clamp from PolIII. This chain is DNA polymerase IV 1 (dinB1), found in Halalkalibacterium halodurans (strain ATCC BAA-125 / DSM 18197 / FERM 7344 / JCM 9153 / C-125) (Bacillus halodurans).